Reading from the N-terminus, the 259-residue chain is MAIIRGIVLYTRQYKDNDLLVRILTETYGMRTFLARGAKKATSKLSAGTQPYTIVTFDGALPKRETGLGYMNDVQDIKVYSRLIEDIEANAYAALIASLIDASFEEGEKITRWYNQLYVALQKLDEGLDPQIIANIFEIQLLVPLGVAPNLRADPITGQVDGKFDYSEKYNGIISEHHFNLDDQRLMLDQKTVFYLRQFSVIDMRQVHDIKMSAITKRGLQRVIDYIYEKQVGLKPRAKSFIEQMHSWQNTLVNFRRNK.

The protein belongs to the RecO family.

Its function is as follows. Involved in DNA repair and RecF pathway recombination. This chain is DNA repair protein RecO, found in Leuconostoc mesenteroides subsp. mesenteroides (strain ATCC 8293 / DSM 20343 / BCRC 11652 / CCM 1803 / JCM 6124 / NCDO 523 / NBRC 100496 / NCIMB 8023 / NCTC 12954 / NRRL B-1118 / 37Y).